A 433-amino-acid polypeptide reads, in one-letter code: Urokinase-type plasminogen activator (433 aa).

A signal peptide spans 1 to 20 (MRVLLACLLVCALVVSDSDG). One can recognise an EGF-like domain in the interval 29-65 (GESNCGCLNGGKCVTYKYFSNIQRCSCPKKFQGEHCE). Intrachain disulfides connect Cys-33–Cys-41, Cys-35–Cys-53, Cys-55–Cys-64, Cys-72–Cys-153, Cys-93–Cys-135, and Cys-124–Cys-148. The interval 36–59 (LNGGKCVTYKYFSNIQRCSCPKKF) is binds urokinase plasminogen activator surface receptor. Positions 72–153 (CYQGNGHSYR…FVQFCMVQDC (82 aa)) constitute a Kringle domain. Residues 154-180 (SVGKSPSSPREKEEFQCGQKALRPRFK) form a connecting peptide region. At Ser-160 the chain carries Phosphoserine. Disulfide bonds link Cys-170-Cys-301, Cys-211-Cys-227, Cys-219-Cys-290, Cys-315-Cys-384, Cys-347-Cys-363, and Cys-374-Cys-402. The Peptidase S1 domain maps to 181 to 426 (IVGGQVTNAE…FLPWINTHTR (246 aa)). Active-site charge relay system residues include His-226 and Asp-277. The Charge relay system role is filled by Ser-378.

Belongs to the peptidase S1 family. Found in high and low molecular mass forms. Each consists of two chains, A and B. The high molecular mass form contains a long chain A which is cleaved to yield a short chain A. Forms heterodimer with SERPINA5. Binds LRP1B; binding is followed by internalization and degradation. Interacts with MRC2. Interacts with PLAUR. In complex with SERPINE1, interacts with PLAUR/uPAR. Interacts with SORL1 and LRP1, either alone or in complex with SERPINE1; these interactions are abolished in the presence of LRPAP1/RAP. The ternary complex composed of PLAUR-PLAU-PAI1 also interacts with SORLA. Post-translationally, produced as an inactive single-chain protein (pro-uPA or sc-uPA), is processed into the active disulfide-linked two-chain form of PLAU/uPA by a proteolytic event mediated, at least, by TMPRSS4.

Its subcellular location is the secreted. The enzyme catalyses Specific cleavage of Arg-|-Val bond in plasminogen to form plasmin.. Inhibited by SERPINA5. Inhibited by SERPINE1. Its function is as follows. Specifically cleaves the zymogen plasminogen to form the active enzyme plasmin. This chain is Urokinase-type plasminogen activator (PLAU), found in Bos taurus (Bovine).